The chain runs to 709 residues: Protein white (709 aa).

Positions 1–35 (MTINTDDQYADGESKTTISSNRRYSTSSFQDQSME) are disordered. Positions 15–32 (KTTISSNRRYSTSSFQDQ) are enriched in polar residues. The ABC transporter domain occupies 103–348 (FTRQRLVKDF…SQLGIPCPPN (246 aa)). ATP-binding positions include 136–143 (GSSGAGKT) and 292–299 (GMAMKGKT). The helical transmembrane segment at 457–475 (LLQTAMVASLIGSIYFGQV) threads the bilayer. The N-linked (GlcNAc...) asparagine glycan is linked to N485. The next 4 helical transmembrane spans lie at 487 to 507 (SLFL…INVF), 537 to 555 (LPLF…YPMI), 564 to 585 (YLTT…GYLI), and 598 to 616 (VGPP…FLNS). N658 carries an N-linked (GlcNAc...) asparagine glycan. A helical membrane pass occupies residues 681 to 700 (LDIGCLFALIVLFRLGALFC).

Belongs to the ABC transporter superfamily. ABCG family. Eye pigment precursor importer (TC 3.A.1.204) subfamily.

Its subcellular location is the membrane. Its function is as follows. May be part of a membrane-spanning permease system necessary for the transport of pigment precursors into pigment cells responsible for eye color. This is Protein white (W) from Anopheles albimanus (New world malaria mosquito).